The following is a 48-amino-acid chain: uncharacterized protein (48 aa).

This is an uncharacterized protein from Acidianus convivator (ABV).